We begin with the raw amino-acid sequence, 116 residues long: Large ribosomal subunit protein uL18 (116 aa).

The protein belongs to the universal ribosomal protein uL18 family. Part of the 50S ribosomal subunit; part of the 5S rRNA/L5/L18/L25 subcomplex. Contacts the 5S and 23S rRNAs.

Its function is as follows. This is one of the proteins that bind and probably mediate the attachment of the 5S RNA into the large ribosomal subunit, where it forms part of the central protuberance. The sequence is that of Large ribosomal subunit protein uL18 from Shewanella sp. (strain ANA-3).